The primary structure comprises 205 residues: Probable GTP-binding protein EngB (205 aa).

An EngB-type G domain is found at 27-201 (TGIEIAFAGR…AAKLDFWFSP (175 aa)). GTP contacts are provided by residues 35–42 (GRSNAGKS), 62–66 (GRTQL), 80–83 (DLPG), 147–150 (TKAD), and 180–182 (FSA). Mg(2+) is bound by residues Ser-42 and Thr-64.

Belongs to the TRAFAC class TrmE-Era-EngA-EngB-Septin-like GTPase superfamily. EngB GTPase family. The cofactor is Mg(2+).

Necessary for normal cell division and for the maintenance of normal septation. In Haemophilus influenzae (strain 86-028NP), this protein is Probable GTP-binding protein EngB.